Here is a 58-residue protein sequence, read N- to C-terminus: Protein translocase subunit SecE (58 aa).

Residues 38-58 (IVMAFVGLLAYLIQLVLAFII) form a helical membrane-spanning segment.

It belongs to the SecE/SEC61-gamma family. Component of the Sec protein translocase complex. Heterotrimer consisting of SecY (alpha), SecG (beta) and SecE (gamma) subunits. The heterotrimers can form oligomers, although 1 heterotrimer is thought to be able to translocate proteins. Interacts with the ribosome. May interact with SecDF, and other proteins may be involved.

The protein resides in the cell membrane. Essential subunit of the Sec protein translocation channel SecYEG. Clamps together the 2 halves of SecY. May contact the channel plug during translocation. This Acidianus ambivalens (Desulfurolobus ambivalens) protein is Protein translocase subunit SecE.